A 426-amino-acid polypeptide reads, in one-letter code: L-ascorbate peroxidase T, chloroplastic (426 aa).

Histidine 112 serves as the catalytic Proton acceptor. Histidine 241 is a heme b binding site. K(+) is bound at residue threonine 242. Residues 245-269 (RARPDRSGWGKPETKYTKTGPGEAG) are disordered. Over residues 246 to 260 (ARPDRSGWGKPETKY) the composition is skewed to basic and acidic residues. Threonine 274 and aspartate 281 together coordinate K(+). The chain crosses the membrane as a helical span at residues 397-417 (YFLNIIIAIGVLVLLSTLFGG).

Belongs to the peroxidase family. Ascorbate peroxidase subfamily. It depends on heme b as a cofactor.

It localises to the plastid. It is found in the chloroplast thylakoid membrane. It catalyses the reaction L-ascorbate + H2O2 = L-dehydroascorbate + 2 H2O. In terms of biological role, plays a key role in hydrogen peroxide removal. The sequence is that of L-ascorbate peroxidase T, chloroplastic (APXT) from Arabidopsis thaliana (Mouse-ear cress).